A 303-amino-acid polypeptide reads, in one-letter code: UDP-3-O-acyl-N-acetylglucosamine deacetylase (303 aa).

Zn(2+)-binding residues include histidine 78, histidine 237, and aspartate 241. Histidine 264 functions as the Proton donor in the catalytic mechanism.

Belongs to the LpxC family. Zn(2+) is required as a cofactor.

It carries out the reaction a UDP-3-O-[(3R)-3-hydroxyacyl]-N-acetyl-alpha-D-glucosamine + H2O = a UDP-3-O-[(3R)-3-hydroxyacyl]-alpha-D-glucosamine + acetate. It participates in glycolipid biosynthesis; lipid IV(A) biosynthesis; lipid IV(A) from (3R)-3-hydroxytetradecanoyl-[acyl-carrier-protein] and UDP-N-acetyl-alpha-D-glucosamine: step 2/6. Catalyzes the hydrolysis of UDP-3-O-myristoyl-N-acetylglucosamine to form UDP-3-O-myristoylglucosamine and acetate, the committed step in lipid A biosynthesis. The polypeptide is UDP-3-O-acyl-N-acetylglucosamine deacetylase (Stenotrophomonas maltophilia (strain K279a)).